Here is a 374-residue protein sequence, read N- to C-terminus: Probable quinol oxidase subunit 2 (374 aa).

Positions methionine 1–glycine 19 are cleaved as a signal peptide. Cysteine 20 carries N-palmitoyl cysteine lipidation. Cysteine 20 is lipidated: S-diacylglycerol cysteine. 2 consecutive transmembrane segments (helical) span residues serine 43–phenylalanine 63 and isoleucine 82–valine 102. The interval methionine 321–histidine 374 is disordered. Residues asparagine 334 to histidine 374 are compositionally biased toward basic and acidic residues.

The protein belongs to the cytochrome c oxidase subunit 2 family.

It localises to the cell membrane. The enzyme catalyses 2 a quinol + O2 = 2 a quinone + 2 H2O. Its function is as follows. Catalyzes quinol oxidation with the concomitant reduction of oxygen to water. Subunit II transfers the electrons from a quinol to the binuclear center of the catalytic subunit I. In Staphylococcus haemolyticus (strain JCSC1435), this protein is Probable quinol oxidase subunit 2 (qoxA).